The following is a 110-amino-acid chain: QVRPFLEVHERSACQARETLVSILQEYPDEISDIFRPSCVAVLRCSGCCTDESLKCTPVGKHTVDLQIMRVNPRTQSSKMEVMKFTEHTACECRPRRKQGEPDGPKEKPR.

Position 1 is a pyrrolidone carboxylic acid (glutamine 1). 3 disulfide bridges follow: cysteine 14/cysteine 56, cysteine 45/cysteine 91, and cysteine 49/cysteine 93.

Belongs to the PDGF/VEGF growth factor family. Snake venom VEGF subfamily. As to quaternary structure, homodimer; disulfide-linked. Interacts with VEGF receptor-2 (KDR) with high affinity. Expressed by the venom gland.

It is found in the secreted. Snake venom VEGFs that may contribute to venom dispersion and prey subjugation by inducing vascular permeability and hypotension. This protein induces an increase in capillary permeability after intradermal injection, as well as a drastic hypotensive effect after intravenous injection. The hypotension is mediated by nitric oxide (NO), which is produced by VEGF-activated endothelium NO synthase. Also induces angiogenesis in vitro, probably through VEGF receptor (KDR/VEGFR-2) signaling. The protein is Snake venom vascular endothelial growth factor toxin HF of Vipera aspis aspis (Aspic viper).